A 363-amino-acid polypeptide reads, in one-letter code: Probable endopolygalacturonase A (363 aa).

The first 20 residues, 1–20, serve as a signal peptide directing secretion; the sequence is MQLLQSSVIAATVGAALVAA. A propeptide spanning residues 21–28 is cleaved from the precursor; sequence APVELEAR. Cysteine 31 and cysteine 46 form a disulfide bridge. PbH1 repeat units lie at residues 158–187, 188–209, 210–230, 239–260, 268–290, and 302–347; these read SDNLNITDVTIDNSAGTAEGHNTDAFDIGS, STYINIDGATVYNQDDCLAINS, GSHITFTNGYCDGGHGLSIGS, VEDVTISNSKVVNSQNGVRIKT, VSNVKFEDITLSGITKYGLVVEQ, and TNGI…SITG. Asparagine 162 is a glycosylation site (N-linked (GlcNAc...) asparagine). Aspartate 202 serves as the catalytic Proton donor. The cysteines at positions 204 and 220 are disulfide-linked. Histidine 224 is an active-site residue. Intrachain disulfides connect cysteine 330-cysteine 335 and cysteine 354-cysteine 363.

The protein belongs to the glycosyl hydrolase 28 family.

The protein resides in the secreted. It carries out the reaction (1,4-alpha-D-galacturonosyl)n+m + H2O = (1,4-alpha-D-galacturonosyl)n + (1,4-alpha-D-galacturonosyl)m.. Its function is as follows. Involved in maceration and soft-rotting of plant tissue. Hydrolyzes the 1,4-alpha glycosidic bonds of de-esterified pectate in the smooth region of the plant cell wall. The chain is Probable endopolygalacturonase A (pgaA) from Aspergillus parasiticus.